The primary structure comprises 395 residues: Long-chain-alcohol dehydrogenase 1 (395 aa).

Residues Gly-98 to Asp-102 and Thr-141 to Gly-144 each bind NAD(+).

Belongs to the iron-containing alcohol dehydrogenase family. Homooctamer.

It catalyses the reaction glycerol + NAD(+) = dihydroxyacetone + NADH + H(+). The enzyme catalyses a long-chain primary fatty alcohol + 2 NAD(+) + H2O = a long-chain fatty acid + 2 NADH + 3 H(+). Long-chain alkyl alcohol dehydrogenase that can oxidize a broad range of alkyl alcohols from ethanol to 1-triacontanol (C2 to C30) as well as 1,3-propanediol and acetaldehyde. The best substrate is ethanol. Also oxidizes glycerol. The polypeptide is Long-chain-alcohol dehydrogenase 1 (adh1) (Geobacillus thermodenitrificans (strain NG80-2)).